The primary structure comprises 199 residues: Crossover junction endodeoxyribonuclease RuvC (199 aa).

Residues Asp7, Glu68, and Asp141 contribute to the active site. Residues Asp7, Glu68, and Asp141 each contribute to the Mg(2+) site.

The protein belongs to the RuvC family. As to quaternary structure, homodimer which binds Holliday junction (HJ) DNA. The HJ becomes 2-fold symmetrical on binding to RuvC with unstacked arms; it has a different conformation from HJ DNA in complex with RuvA. In the full resolvosome a probable DNA-RuvA(4)-RuvB(12)-RuvC(2) complex forms which resolves the HJ. Requires Mg(2+) as cofactor.

The protein resides in the cytoplasm. The enzyme catalyses Endonucleolytic cleavage at a junction such as a reciprocal single-stranded crossover between two homologous DNA duplexes (Holliday junction).. Functionally, the RuvA-RuvB-RuvC complex processes Holliday junction (HJ) DNA during genetic recombination and DNA repair. Endonuclease that resolves HJ intermediates. Cleaves cruciform DNA by making single-stranded nicks across the HJ at symmetrical positions within the homologous arms, yielding a 5'-phosphate and a 3'-hydroxyl group; requires a central core of homology in the junction. The consensus cleavage sequence is 5'-(A/T)TT(C/G)-3'. Cleavage occurs on the 3'-side of the TT dinucleotide at the point of strand exchange. HJ branch migration catalyzed by RuvA-RuvB allows RuvC to scan DNA until it finds its consensus sequence, where it cleaves and resolves the cruciform DNA. The chain is Crossover junction endodeoxyribonuclease RuvC from Saccharopolyspora erythraea (strain ATCC 11635 / DSM 40517 / JCM 4748 / NBRC 13426 / NCIMB 8594 / NRRL 2338).